The chain runs to 640 residues: Chaperone protein HtpG (640 aa).

An a; substrate-binding region spans residues 1–352 (MTEQTATQNY…SADLPLNVSR (352 aa)). The b stretch occupies residues 353-571 (ELLQESRDVK…DGELSPQLIR (219 aa)). A c region spans residues 572–640 (MLKQAGQAVP…VKRINSLLLK (69 aa)).

This sequence belongs to the heat shock protein 90 family. As to quaternary structure, homodimer.

It localises to the cytoplasm. Its function is as follows. Molecular chaperone. Has ATPase activity. The sequence is that of Chaperone protein HtpG from Acinetobacter baylyi (strain ATCC 33305 / BD413 / ADP1).